Reading from the N-terminus, the 265-residue chain is Putative carbamate hydrolase RutD (265 aa).

In terms of domain architecture, AB hydrolase-1 spans 14-123 (PTLVLSSGLG…WSSPNPHSAR (110 aa)).

Belongs to the AB hydrolase superfamily. Hydrolase RutD family.

The catalysed reaction is carbamate + 2 H(+) = NH4(+) + CO2. In terms of biological role, involved in pyrimidine catabolism. May facilitate the hydrolysis of carbamate, a reaction that can also occur spontaneously. This chain is Putative carbamate hydrolase RutD, found in Stutzerimonas stutzeri (strain A1501) (Pseudomonas stutzeri).